The sequence spans 405 residues: Argininosuccinate synthase (405 aa).

Residues 10-18 (AYSGGVDTS) and alanine 38 contribute to the ATP site. Tyrosine 89 is a binding site for L-citrulline. Glycine 119 lines the ATP pocket. The L-aspartate site is built by threonine 121, asparagine 125, and aspartate 126. Asparagine 125 contacts L-citrulline. L-citrulline is bound by residues arginine 129, serine 177, serine 186, glutamate 262, and tyrosine 274.

It belongs to the argininosuccinate synthase family. Type 1 subfamily. In terms of assembly, homotetramer.

It localises to the cytoplasm. It catalyses the reaction L-citrulline + L-aspartate + ATP = 2-(N(omega)-L-arginino)succinate + AMP + diphosphate + H(+). Its pathway is amino-acid biosynthesis; L-arginine biosynthesis; L-arginine from L-ornithine and carbamoyl phosphate: step 2/3. This is Argininosuccinate synthase from Synechococcus sp. (strain RCC307).